Here is a 477-residue protein sequence, read N- to C-terminus: MQVLHVCSELFPLLKTGGLADVVGALPAAQIAAGDDTRVLLPAFPDLKKGITQIQVVAQLQTFAGYVELHFGHFNGVGIYLIDAPGLYDRPGSPYHDESQYAYSDNYLRFALLGWVSCELACGLDPWWRPEVVHAHDWHAGLSCAYLAARGRPAKSVFTVHNLAYQGLFNARHMEQIQLPHSFFDVYGMEFHGQISYLKAGLFYADHVTAVSPTYAREITQPEFGYGMEGLLKQRLLEGRLSGILNGVDPAIWNPAHDLLLAARYNRDVLDAKRENKRQLQIAMGLKIDEKAPIFAVVSRLTKQKGLDLVLEALPGLLEQGGQLVVLGAGDAELQQGFLAAAAENPGQVGVQIGYHEAFSHRIMGGADVILVPSRFEPCGLTQLYALKYGTLPLVRRTGGLADTVNDCSLENLADGIASGFSFEDSNAWSLLRAIRRSFVLWSRPSLWRYVQRQAMGMDFSWQVAAVAYRDLYQRLL.

K15 provides a ligand contact to ADP-alpha-D-glucose.

It belongs to the glycosyltransferase 1 family. Bacterial/plant glycogen synthase subfamily.

The catalysed reaction is [(1-&gt;4)-alpha-D-glucosyl](n) + ADP-alpha-D-glucose = [(1-&gt;4)-alpha-D-glucosyl](n+1) + ADP + H(+). It functions in the pathway glycan biosynthesis; glycogen biosynthesis. Functionally, synthesizes alpha-1,4-glucan chains using ADP-glucose. This chain is Glycogen synthase, found in Erwinia tasmaniensis (strain DSM 17950 / CFBP 7177 / CIP 109463 / NCPPB 4357 / Et1/99).